The chain runs to 294 residues: GTPase Era (294 aa).

Positions 2 to 171 (NSGVVTIIGR…LSLLIELLPE (170 aa)) constitute an Era-type G domain. The G1 stretch occupies residues 10–17 (GRPSAGKS). 10-17 (GRPSAGKS) is a GTP binding site. Residues 36–40 (QTTRN) are G2. Residues 57-60 (DTPG) form a G3 region. Residues 57–61 (DTPGY) and 119–122 (NKAD) each bind GTP. The segment at 119–122 (NKAD) is G4. Residues 150–152 (ISA) are G5. Positions 202–280 (TREEIPHALY…QLDLQVRVNK (79 aa)) constitute a KH type-2 domain.

Belongs to the TRAFAC class TrmE-Era-EngA-EngB-Septin-like GTPase superfamily. Era GTPase family. As to quaternary structure, monomer.

Its subcellular location is the cytoplasm. The protein localises to the cell inner membrane. Functionally, an essential GTPase that binds both GDP and GTP, with rapid nucleotide exchange. Plays a role in 16S rRNA processing and 30S ribosomal subunit biogenesis and possibly also in cell cycle regulation and energy metabolism. This is GTPase Era from Treponema denticola (strain ATCC 35405 / DSM 14222 / CIP 103919 / JCM 8153 / KCTC 15104).